The chain runs to 141 residues: Nucleoside diphosphate kinase (141 aa).

6 residues coordinate ATP: K11, F59, R87, T93, R104, and N114. H117 acts as the Pros-phosphohistidine intermediate in catalysis.

This sequence belongs to the NDK family. In terms of assembly, homotetramer. Mg(2+) serves as cofactor.

The protein resides in the cytoplasm. It carries out the reaction a 2'-deoxyribonucleoside 5'-diphosphate + ATP = a 2'-deoxyribonucleoside 5'-triphosphate + ADP. The enzyme catalyses a ribonucleoside 5'-diphosphate + ATP = a ribonucleoside 5'-triphosphate + ADP. Major role in the synthesis of nucleoside triphosphates other than ATP. The ATP gamma phosphate is transferred to the NDP beta phosphate via a ping-pong mechanism, using a phosphorylated active-site intermediate. The protein is Nucleoside diphosphate kinase of Stenotrophomonas maltophilia (strain R551-3).